We begin with the raw amino-acid sequence, 435 residues long: Nuclear receptor subfamily 6 group A member 1 (435 aa).

Residues 11-86 constitute a DNA-binding region (nuclear receptor); that stretch reads QRACLICGDR…MGMNRKAIRE (76 aa). NR C4-type zinc fingers lie at residues 14-34 and 50-69; these read CLIC…CEGC and CSRD…CQYC. Positions 84 to 157 are disordered; sequence IREDGMPGGR…VSTPSSSRSM (74 aa). Over residues 121–141 the composition is skewed to polar residues; the sequence is NTSWSNNGDSDHSSPGNGVSE. Residues 142–156 are compositionally biased toward low complexity; it reads SNQPSPVSTPSSSRS. The NR LBD domain occupies 204 to 435; it reads QSHTLINQLL…HSCKTSLTKE (232 aa).

It belongs to the nuclear hormone receptor family. NR6 subfamily. In terms of assembly, homodimer.

The protein localises to the cytoplasm. It localises to the nucleus. Functionally, probable orphan nuclear receptor. Binds to a response element containing repeats of the motif 5'-AGGTCA-3'. Required for anterior-posterior patterning during organogenesis. Acts with chordin to play a role in patterning the midbrain-hindbrain. Isoform Em is required for integrin-mediated cell matrix interaction during neurulation and for the morphogenetic movements leading to formation of the neural tube. Also mediates the effect of retinoic acid on primary neurogenesis. The protein is Nuclear receptor subfamily 6 group A member 1 of Xenopus tropicalis (Western clawed frog).